A 141-amino-acid chain; its full sequence is Large ribosomal subunit protein uL11 (141 aa).

This sequence belongs to the universal ribosomal protein uL11 family. Part of the ribosomal stalk of the 50S ribosomal subunit. Interacts with L10 and the large rRNA to form the base of the stalk. L10 forms an elongated spine to which L12 dimers bind in a sequential fashion forming a multimeric L10(L12)X complex. One or more lysine residues are methylated.

In terms of biological role, forms part of the ribosomal stalk which helps the ribosome interact with GTP-bound translation factors. In Limosilactobacillus reuteri (strain DSM 20016) (Lactobacillus reuteri), this protein is Large ribosomal subunit protein uL11.